We begin with the raw amino-acid sequence, 103 residues long: Large ribosomal subunit protein uL23 (103 aa).

Belongs to the universal ribosomal protein uL23 family. As to quaternary structure, part of the 50S ribosomal subunit. Contacts protein L29, and trigger factor when it is bound to the ribosome.

One of the early assembly proteins it binds 23S rRNA. One of the proteins that surrounds the polypeptide exit tunnel on the outside of the ribosome. Forms the main docking site for trigger factor binding to the ribosome. The sequence is that of Large ribosomal subunit protein uL23 from Aquifex aeolicus (strain VF5).